A 539-amino-acid chain; its full sequence is Bifunctional purine biosynthesis protein PurH (539 aa).

The MGS-like domain maps to 8-159; it reads FPIPDLHRVR…KNYAYTGVVT (152 aa).

Belongs to the PurH family.

The catalysed reaction is (6R)-10-formyltetrahydrofolate + 5-amino-1-(5-phospho-beta-D-ribosyl)imidazole-4-carboxamide = 5-formamido-1-(5-phospho-D-ribosyl)imidazole-4-carboxamide + (6S)-5,6,7,8-tetrahydrofolate. It carries out the reaction IMP + H2O = 5-formamido-1-(5-phospho-D-ribosyl)imidazole-4-carboxamide. Its pathway is purine metabolism; IMP biosynthesis via de novo pathway; 5-formamido-1-(5-phospho-D-ribosyl)imidazole-4-carboxamide from 5-amino-1-(5-phospho-D-ribosyl)imidazole-4-carboxamide (10-formyl THF route): step 1/1. It functions in the pathway purine metabolism; IMP biosynthesis via de novo pathway; IMP from 5-formamido-1-(5-phospho-D-ribosyl)imidazole-4-carboxamide: step 1/1. This Bartonella tribocorum (strain CIP 105476 / IBS 506) protein is Bifunctional purine biosynthesis protein PurH.